The sequence spans 238 residues: Probable transcriptional regulatory protein YeeN (238 aa).

Belongs to the TACO1 family. YeeN subfamily.

It is found in the cytoplasm. The sequence is that of Probable transcriptional regulatory protein YeeN from Escherichia coli O157:H7.